We begin with the raw amino-acid sequence, 110 residues long: Large ribosomal subunit protein uL22 (110 aa).

Belongs to the universal ribosomal protein uL22 family. In terms of assembly, part of the 50S ribosomal subunit.

Its function is as follows. This protein binds specifically to 23S rRNA; its binding is stimulated by other ribosomal proteins, e.g. L4, L17, and L20. It is important during the early stages of 50S assembly. It makes multiple contacts with different domains of the 23S rRNA in the assembled 50S subunit and ribosome. In terms of biological role, the globular domain of the protein is located near the polypeptide exit tunnel on the outside of the subunit, while an extended beta-hairpin is found that lines the wall of the exit tunnel in the center of the 70S ribosome. This chain is Large ribosomal subunit protein uL22, found in Baumannia cicadellinicola subsp. Homalodisca coagulata.